The chain runs to 213 residues: Dimethyl sulfoxide reductase transcriptional activator (213 aa).

The region spanning 155-206 is the HTH bat-type domain; sequence LTAKQREAALIAVHHGYYETPRRTELATLAEALGISKSALSQRLNAVEAKLA.

Functionally, involved in activating dmsEABCD gene expression related to dimethyl sulfoxide (DMSO) reductase. Required for anaerobic respiration on dimethyl sulfoxide (DMSO). In Haloferax volcanii (strain ATCC 29605 / DSM 3757 / JCM 8879 / NBRC 14742 / NCIMB 2012 / VKM B-1768 / DS2) (Halobacterium volcanii), this protein is Dimethyl sulfoxide reductase transcriptional activator.